We begin with the raw amino-acid sequence, 193 residues long: ATP-dependent Clp protease proteolytic subunit (193 aa).

Ser97 acts as the Nucleophile in catalysis. His122 is a catalytic residue.

It belongs to the peptidase S14 family. In terms of assembly, fourteen ClpP subunits assemble into 2 heptameric rings which stack back to back to give a disk-like structure with a central cavity, resembling the structure of eukaryotic proteasomes.

It localises to the cytoplasm. The enzyme catalyses Hydrolysis of proteins to small peptides in the presence of ATP and magnesium. alpha-casein is the usual test substrate. In the absence of ATP, only oligopeptides shorter than five residues are hydrolyzed (such as succinyl-Leu-Tyr-|-NHMec, and Leu-Tyr-Leu-|-Tyr-Trp, in which cleavage of the -Tyr-|-Leu- and -Tyr-|-Trp bonds also occurs).. In terms of biological role, cleaves peptides in various proteins in a process that requires ATP hydrolysis. Has a chymotrypsin-like activity. Plays a major role in the degradation of misfolded proteins. This chain is ATP-dependent Clp protease proteolytic subunit, found in Fusobacterium nucleatum subsp. nucleatum (strain ATCC 25586 / DSM 15643 / BCRC 10681 / CIP 101130 / JCM 8532 / KCTC 2640 / LMG 13131 / VPI 4355).